Consider the following 107-residue polypeptide: Replication restart protein PriB (107 aa).

In terms of domain architecture, SSB spans 1-97; sequence MNTLELSARV…LHLQQARRIA (97 aa).

It belongs to the PriB family. In terms of assembly, homodimer. Interacts with PriA and DnaT. Component of the replication restart primosome. Primosome assembly occurs via a 'hand-off' mechanism. PriA binds to replication forks, subsequently PriB then DnaT bind; DnaT then displaces ssDNA to generate the helicase loading substrate.

In terms of biological role, involved in the restart of stalled replication forks, which reloads the replicative helicase on sites other than the origin of replication; the PriA-PriB pathway is the major replication restart pathway. During primosome assembly it facilitates complex formation between PriA and DnaT on DNA; stabilizes PriA on DNA. Stimulates the DNA unwinding activity of PriA helicase. This Bordetella parapertussis (strain 12822 / ATCC BAA-587 / NCTC 13253) protein is Replication restart protein PriB.